The sequence spans 236 residues: Phosphoribosylaminoimidazole-succinocarboxamide synthase (236 aa).

Belongs to the SAICAR synthetase family.

The enzyme catalyses 5-amino-1-(5-phospho-D-ribosyl)imidazole-4-carboxylate + L-aspartate + ATP = (2S)-2-[5-amino-1-(5-phospho-beta-D-ribosyl)imidazole-4-carboxamido]succinate + ADP + phosphate + 2 H(+). Its pathway is purine metabolism; IMP biosynthesis via de novo pathway; 5-amino-1-(5-phospho-D-ribosyl)imidazole-4-carboxamide from 5-amino-1-(5-phospho-D-ribosyl)imidazole-4-carboxylate: step 1/2. This is Phosphoribosylaminoimidazole-succinocarboxamide synthase from Streptococcus equi subsp. zooepidemicus (strain H70).